The primary structure comprises 783 residues: Probable phosphoketolase (783 aa).

It belongs to the XFP family. Thiamine diphosphate serves as cofactor.

This is Probable phosphoketolase from Rhodopseudomonas palustris (strain TIE-1).